A 638-amino-acid chain; its full sequence is Threonine--tRNA ligase (638 aa).

Residues 1 to 62 enclose the TGS domain; it reads MYQLTLPDKS…EKNSNIEVLT (62 aa). Residues 246-537 form a catalytic region; sequence DHRKIGKEMD…LIEHYEGKFP (292 aa). Positions 337, 388, and 514 each coordinate Zn(2+).

This sequence belongs to the class-II aminoacyl-tRNA synthetase family. As to quaternary structure, homodimer. Zn(2+) serves as cofactor.

It localises to the cytoplasm. The enzyme catalyses tRNA(Thr) + L-threonine + ATP = L-threonyl-tRNA(Thr) + AMP + diphosphate + H(+). Catalyzes the attachment of threonine to tRNA(Thr) in a two-step reaction: L-threonine is first activated by ATP to form Thr-AMP and then transferred to the acceptor end of tRNA(Thr). Also edits incorrectly charged L-seryl-tRNA(Thr). The protein is Threonine--tRNA ligase of Leptospira interrogans serogroup Icterohaemorrhagiae serovar copenhageni (strain Fiocruz L1-130).